Reading from the N-terminus, the 88-residue chain is Sec-independent protein translocase protein TatA (88 aa).

A helical transmembrane segment spans residues 4–24 (LSIWHWLIVLAVVLVLFVGGG). Positions 45–88 (ADDETMEGSTGSGGHIAPPGPAAGTVQRDASFSGTGRPSGSSTP) are disordered. Low complexity predominate over residues 75–88 (SFSGTGRPSGSSTP).

The protein belongs to the TatA/E family. As to quaternary structure, the Tat system comprises two distinct complexes: a TatABC complex, containing multiple copies of TatA, TatB and TatC subunits, and a separate TatA complex, containing only TatA subunits. Substrates initially bind to the TatABC complex, which probably triggers association of the separate TatA complex to form the active translocon.

Its subcellular location is the cell inner membrane. Part of the twin-arginine translocation (Tat) system that transports large folded proteins containing a characteristic twin-arginine motif in their signal peptide across membranes. TatA could form the protein-conducting channel of the Tat system. The polypeptide is Sec-independent protein translocase protein TatA (Gluconacetobacter diazotrophicus (strain ATCC 49037 / DSM 5601 / CCUG 37298 / CIP 103539 / LMG 7603 / PAl5)).